The sequence spans 426 residues: O-methyltransferase pyvH (426 aa).

Residues 258–259, D281, 308–309, and R323 each bind S-adenosyl-L-methionine; these read GG and DF. H327 acts as the Proton acceptor in catalysis.

This sequence belongs to the class I-like SAM-binding methyltransferase superfamily. Cation-independent O-methyltransferase family.

Its pathway is secondary metabolite biosynthesis. O-methyltransferase; part of the gene cluster that mediates the biosynthesis of pyranoviolin A, a pyranonigrin analog with a C-3 methoxy group. Initially, the PKS portion of pyvA synthesizes C-10 carbon chain from 5 molecules of malonyl-CoA, which is then condensed with the thiolation (T) domain-bound glycine activated by the adenylation (A) domain. The subsequent chain release by Dieckmann condensation (DKC) could be catalyzed by the TE domain present at the C-terminus of pyvA and/or the alpha/beta hydrolase pyvD, installing the tetramic acid moiety. The FAD-dependent monooxygenase pyvC next epoxidizes one of the olefins of the polyketide part, and the epoxide ring-opening induces the dihydro-gamma-pyrone ring formation. The cytochrome P450 monooxygeanse pyvB would be responsible for the 2 consecutive reactions, in which the dihydro-gamma-pyrone is oxidized to gamma-pyrone and C-7 is hydroxylated to yield pyranonigrin F. Finally, the O-methyltransferase pyvH methylates the C-3 hydroxy group to complete the biosynthesis. The chain is O-methyltransferase pyvH from Aspergillus violaceofuscus (strain CBS 115571).